The sequence spans 1402 residues: MNQELATNPLNPLAAPRQFDEIKISLASPEEILAWSYGEVKKPETINYRTFKPERDGLFCARIFGPIKDYECLCGKYKRMKYRGLVCEKCGVEVTLQKVRRERMGHIELAAPVAHIWFLKSLPSRIGLMLDMTLRDLERILYFENYVVIEPGLTDLSYGQLLTEEEFLDAQDQYGADAFTANIGAEAIREMLANIDLAATAEQLREELKEATGELKPKKIIKRLKIVESFLESGNRPEWMVLTVIPVIPPELRPLVPLDGGRFATSDLNDLYRRVINRNNRLKRLIELRAPDIIVRNEKRMLQESVDALFDNGRRGRVITGNNKRPLKSLSDMLKGKQGRFRQNLLGKRVDFSGRSVIVTGPELKLHQCGLPKKMALELFKPFIYSRLEAKGLSSTVKQAKKLVEKERPEVWDILDEVIREHPVLLNRAPTLHRLGIQAFEPILIEGKAIQLHPLVCSAFNADFDGDQMAVHVPLSLEAQLEARVLMMSTNNVLSPANGAPIIVPSQDMVLGLYYTTMEREGMKGEGMAFTSLEEVEHALASGAVHLHARITARLPQIDENGNEVITRFETTPGRLRLGALLPKNAKAPFELVNRLLRKKDIQNVIDTVYRYCGQKESVIFCDQIMGLGFREAFRAGISFGKDDMVVPPTKWDLVEETQDQVKQFEQQYLDGLITQGEKYNKVVDAWSKCNDRVTDAMMKTISATKKDEKGAELEPNSVYMMAHSGARGSVSQMKQLGGMRGLMAKPNGEIIETPIISNFKEGLTVLEYFNSTHGARKGLSDTALKTANSGYLTRRLVDVAQDCIIREHDCGTDHAITASAAVNDGEVVSPLSERVLGRVAAEDVLVPGEDVVIVRKNELIDERKADEIEAAGVQNVRIRSALTCESDDGVCALCYGRDLARGTLVNIGEAVGIIAAQSIGEPGTQLTMRTFHIGGIAQGGQQSFIAAAQEGTVAFENESTLENANGELIVMSRNMQLHIKSATGDTLASHKLFYGSKLFVREGDAVARGQKMFEWDPYTLPIIAEKAGVAKYVDLISGISVRDETDDATGMTQKIVTDWRSAPKGNELKPEIIIVDQDGEPVRNEQGNPVTYPMSVEAILSVEDGQEIKAGDVVARIPREGAKTKDITGGLPRVAELFEARRPKDHAIIAEIDGYVRFGKDYKNKRRIAIEPADDTLEPVEYMVPKGKHIPVQEGDFVQKGDYIMDGNPAPHDILRIMGIEALADYLIDEVQDVYRLQGVKINDKHIEVIVRQMLQKIEILDSGDTTLLKGEHVDRDEFEEENAKIEAKGGRQATGEPVLLGITKASLQTRSFISAASFQETTRVLTEAAVQGKRDKLVGLKENVIVGRLIPAGTGGATARVRRIATDRDQEVIEARRAEAEAAAALIAPEDTPAEVGGED.

Zn(2+) is bound by residues Cys72, Cys74, Cys87, and Cys90. Asp463, Asp465, and Asp467 together coordinate Mg(2+). 4 residues coordinate Zn(2+): Cys811, Cys885, Cys892, and Cys895.

It belongs to the RNA polymerase beta' chain family. As to quaternary structure, the RNAP catalytic core consists of 2 alpha, 1 beta, 1 beta' and 1 omega subunit. When a sigma factor is associated with the core the holoenzyme is formed, which can initiate transcription. The cofactor is Mg(2+). Zn(2+) is required as a cofactor.

It carries out the reaction RNA(n) + a ribonucleoside 5'-triphosphate = RNA(n+1) + diphosphate. DNA-dependent RNA polymerase catalyzes the transcription of DNA into RNA using the four ribonucleoside triphosphates as substrates. The sequence is that of DNA-directed RNA polymerase subunit beta' from Paracoccus denitrificans (strain Pd 1222).